A 258-amino-acid chain; its full sequence is Tritrans,polycis-undecaprenyl-diphosphate synthase (geranylgeranyl-diphosphate specific) (258 aa).

Asp-37 is a catalytic residue. Asp-37 serves as a coordination point for Mg(2+). Residues 38 to 41, His-54, and 82 to 84 each bind substrate; these read GNRR and STE. Asn-85 acts as the Proton acceptor in catalysis. Substrate contacts are provided by residues Phe-86, Arg-88, Arg-207, and 213–215; that span reads RIS. A Mg(2+)-binding site is contributed by Glu-226.

The protein belongs to the UPP synthase family. Homodimer. Mg(2+) serves as cofactor.

It catalyses the reaction geranylgeranyl diphosphate + 7 isopentenyl diphosphate = tri-trans,hepta-cis-undecaprenyl diphosphate + 7 diphosphate. Its function is as follows. Catalyzes the sequential condensation of isopentenyl diphosphate (IPP) with geranylgeranyl diphosphate (GGPP) to yield (2Z,6Z,10Z,14Z,18Z,22Z,26Z,30E,34E,38E)-undecaprenyl diphosphate (tritrans,heptacis-UPP). It is probably the precursor of glycosyl carrier lipids. In Thermoplasma acidophilum (strain ATCC 25905 / DSM 1728 / JCM 9062 / NBRC 15155 / AMRC-C165), this protein is Tritrans,polycis-undecaprenyl-diphosphate synthase (geranylgeranyl-diphosphate specific).